Consider the following 366-residue polypeptide: MWPLSHRHLCLAFLLVCVLSAISFFLHVHQDSFRHGLGLSLLCPDRGLVTHPVAIFCLPGTPMSPNTSSPCPQHPASLSGTWTIYPDGRFGNQMGQYATLLALAQLNGRRAFILPAMHAALAPVFRITLPVLAPEVDGHTPWRELRLHDWMSEEYADLEDPFLKLSGFPCSWTFFHHLREQIRSEFTLHDHLREEAQSVLRRLRLGRPWDRPRTFVGVHVRRGDYLQVMPQRWKGVVGNSAYLREAMDWFRARHEAPVFVVTSNGMEWCRENIDTSKGDVMFAGDGQEASPWKDFALLTQCNHTIMTIGTFGFWAAYLAGGDTVYLANFTLPDSEFLKIFKPEAAFLPEWVGINADLSPLWTLAEP.

The Cytoplasmic portion of the chain corresponds to 1-8; that stretch reads MWPLSHRH. The chain crosses the membrane as a helical; Signal-anchor for type II membrane protein span at residues 9–25; sequence LCLAFLLVCVLSAISFF. Topologically, residues 26 to 366 are lumenal; the sequence is LHVHQDSFRH…LSPLWTLAEP (341 aa). N-linked (GlcNAc...) asparagine glycans are attached at residues asparagine 66, asparagine 302, and asparagine 328.

Belongs to the glycosyltransferase 11 family.

Its subcellular location is the golgi apparatus. It localises to the golgi stack membrane. It carries out the reaction a beta-D-galactosyl-(1-&gt;4)-N-acetyl-beta-D-glucosaminyl derivative + GDP-beta-L-fucose = an alpha-L-Fuc-(1-&gt;2)-beta-D-Gal-(1-&gt;4)-beta-D-GlcNAc derivative + GDP + H(+). The catalysed reaction is a ganglioside GA1 + GDP-beta-L-fucose = a ganglioside Fuc-GA1 + GDP + H(+). The enzyme catalyses a beta-D-Gal-(1-&gt;3)-beta-D-GlcNAc-(1-&gt;3)-beta-D-Gal-(1-&gt;4)-beta-D-Glc-(1&lt;-&gt;1')-Cer(d18:1(4E)) + GDP-beta-L-fucose = alpha-L-fucosyl-(1-&gt;2)- beta-D-galactosyl-(1-&gt;3)-N-acetyl-beta-D-glucosaminyl-(1-&gt;3)-beta-D-galactosyl-(1-&gt;4)-beta-D-glucosyl-(1&lt;-&gt;1')-N-acylsphing-4-enine + GDP + H(+). It catalyses the reaction a neolactoside nLc4Cer(d18:1(4E)) + GDP-beta-L-fucose = a neolactoside IV(2)-alpha-Fuc-nLc4Cer(d18:1(4E)) + GDP + H(+). It carries out the reaction a ganglioside GM1 + GDP-beta-L-fucose = a ganglioside Fuc-GM1 + GDP + H(+). The catalysed reaction is beta-D-galactosyl-(1-&gt;3)-N-acetyl-D-galactosamine + GDP-beta-L-fucose = alpha-L-fucosyl-(1-&gt;2)-beta-D-galactosyl-(1-&gt;3)-N-acetyl-D-galactosamine + GDP + H(+). It participates in protein modification; protein glycosylation. Catalyzes the transfer of L-fucose, from a guanosine diphosphate-beta-L-fucose, to the terminal galactose residue of glycoconjugates through an alpha(1,2) linkage leading to H antigen synthesis that is an intermediate substrate in the synthesis of ABO blood group antigens. H antigen is essential for maturation of the glomerular layer of the main olfactory bulb, in cell migration and early cell-cell contacts during tumor associated angiogenesis. Preferentially fucosylates soluble lactose and to a lesser extent fucosylates glycolipids gangliosides GA1 and GM1a. The polypeptide is Galactoside alpha-(1,2)-fucosyltransferase 1 (Alouatta caraya (Black howler monkey)).